The primary structure comprises 95 residues: IgNAR transmembrane form NE (95 aa).

Positions 1–36 (LTFSTRSLLNLPAVEWKSGAKYTCTASHSPSQSTVK) constitute an Ig-like domain. A compositionally biased stretch (polar residues) spans 24 to 35 (CTASHSPSQSTV). The disordered stretch occupies residues 24-79 (CTASHSPSQSTVKRVIRNPKESPKGSSETRKSPLEIMESPEDYGTEEDQLENVNED). Over residues 41-56 (NPKESPKGSSETRKSP) the composition is skewed to basic and acidic residues. The span at 61–77 (ESPEDYGTEEDQLENVN) shows a compositional bias: acidic residues. N-linked (GlcNAc...) asparagine glycosylation is present at asparagine 81.

Expressed mainly in lymphoid tissues including spleen, epigonal organ and circulating lymphocytes. Also expressed at low levels in the pancreas.

The chain is IgNAR transmembrane form NE from Ginglymostoma cirratum (Nurse shark).